Consider the following 401-residue polypeptide: Ufm1-specific protease 2 (401 aa).

Residues Cys234, Asp358, and His360 contribute to the active site.

It belongs to the peptidase C78 family.

Its subcellular location is the endoplasmic reticulum. It is found in the cytoplasm. The protein resides in the nucleus. Its function is as follows. Thiol-dependent isopeptidase that specifically cleaves UFM1, a ubiquitin-like modifier protein, from conjugated proteins. While it is also able to mediate the processing of UFM1 precursors, a prerequisite for conjugation reactions, ufsp2 mainly acts as a protein deUFMylase that mediates deconjugation of UFM1 from target proteins. The polypeptide is Ufm1-specific protease 2 (Danio rerio (Zebrafish)).